The following is a 108-amino-acid chain: Cytochrome c6 (108 aa).

The first 23 residues, 1-23 (MRLLFAFFIICHIFTNNVQLTFA), serve as a signal peptide directing secretion. Residues Cys37, Cys40, His41, and Met81 each contribute to the heme c site.

Belongs to the cytochrome c family. PetJ subfamily. In terms of assembly, monomer. In terms of processing, binds 1 heme c group covalently per subunit.

Its subcellular location is the plastid. It localises to the chloroplast thylakoid lumen. Its function is as follows. Functions as an electron carrier between membrane-bound cytochrome b6-f and photosystem I in oxygenic photosynthesis. The chain is Cytochrome c6 from Gracilaria tenuistipitata var. liui (Red alga).